Reading from the N-terminus, the 46-residue chain is MESSSPALSVAIAVLAALLGLTGFGVYTAFGPPSKRLDDPFDDHED.

The helical transmembrane segment at 10-30 (VAIAVLAALLGLTGFGVYTAF) threads the bilayer.

It belongs to the PsbN family.

It is found in the cellular thylakoid membrane. Functionally, may play a role in photosystem I and II biogenesis. In Synechococcus sp. (strain WH7803), this protein is Protein PsbN.